The following is a 455-amino-acid chain: Tubulin delta chain (455 aa).

143-149 (AGGTGSG) provides a ligand contact to GTP.

It belongs to the tubulin family. As to quaternary structure, found in a complex with TEDC1, TEDC2, TUBE1 and TUBD1. In terms of tissue distribution, highly expressed in testis.

Its subcellular location is the cell projection. The protein resides in the cilium. The protein localises to the cytoplasm. It localises to the cytoskeleton. It is found in the microtubule organizing center. Its subcellular location is the centrosome. The protein resides in the centriole. The protein localises to the nucleus. Acts as a positive regulator of hedgehog signaling and regulates ciliary function. This chain is Tubulin delta chain (Tubd1), found in Mus musculus (Mouse).